Reading from the N-terminus, the 166-residue chain is Regulatory protein RecX (166 aa).

Belongs to the RecX family.

The protein localises to the cytoplasm. Modulates RecA activity. The chain is Regulatory protein RecX from Shigella boydii serotype 18 (strain CDC 3083-94 / BS512).